The chain runs to 610 residues: Protein SAN1 (610 aa).

A compositionally biased stretch (polar residues) spans 1 to 10 (MSESGQEQNR). Disordered stretches follow at residues 1-36 (MSES…NGGA) and 176-231 (VDST…PSIP). Residues 11 to 36 (GTNTSPNNAENNNNSNAASGPLNGGA) are compositionally biased toward low complexity. The span at 194–203 (EGTKKRKDNE) shows a compositional bias: basic and acidic residues. The span at 210 to 223 (TADNDSNPSITNAT) shows a compositional bias: polar residues. The segment at 240 to 280 (NDEETNPSYKHSPIKLPCGHIFGRECIYKWSRLENSCPLCR) adopts an RING-type zinc-finger fold. Disordered stretches follow at residues 318–348 (TAVN…ASSG), 360–453 (VPQN…TDPH), 471–502 (GTSD…TTQG), 514–554 (GHFT…GVAS), and 569–610 (NNNS…RSSQ). Polar residues predominate over residues 319-348 (AVNSTNENSSAPSENTSNTTVPTIGNASSG). Low complexity-rich tracts occupy residues 384–406 (NGPS…NQSP) and 425–447 (PSAS…NTSS). Residues 471 to 492 (GTSDTSATTAPGAQTVHNQGRN) show a composition bias toward polar residues. Over residues 493–502 (DSSSSDTTQG) the composition is skewed to low complexity. Polar residues-rich tracts occupy residues 533 to 554 (QQRG…GVAS) and 592 to 610 (DTTI…RSSQ).

Plays a specific role in mating-type regulation of yeast, by acting post-translationally to control the stability or activity of the SIR4 proteins. The sequence is that of Protein SAN1 (SAN1) from Saccharomyces cerevisiae (strain ATCC 204508 / S288c) (Baker's yeast).